A 207-amino-acid polypeptide reads, in one-letter code: Large ribosomal subunit protein uL4 (207 aa).

Belongs to the universal ribosomal protein uL4 family. In terms of assembly, part of the 50S ribosomal subunit.

In terms of biological role, one of the primary rRNA binding proteins, this protein initially binds near the 5'-end of the 23S rRNA. It is important during the early stages of 50S assembly. It makes multiple contacts with different domains of the 23S rRNA in the assembled 50S subunit and ribosome. Functionally, forms part of the polypeptide exit tunnel. The chain is Large ribosomal subunit protein uL4 from Pelagibacter ubique (strain HTCC1062).